The following is a 257-amino-acid chain: Large ribosomal subunit protein eL8z (257 aa).

Belongs to the eukaryotic ribosomal protein eL8 family.

The sequence is that of Large ribosomal subunit protein eL8z (RPL7AA) from Arabidopsis thaliana (Mouse-ear cress).